The sequence spans 248 residues: Aspartate/glutamate leucyltransferase (248 aa).

This sequence belongs to the R-transferase family. Bpt subfamily.

It is found in the cytoplasm. The enzyme catalyses N-terminal L-glutamyl-[protein] + L-leucyl-tRNA(Leu) = N-terminal L-leucyl-L-glutamyl-[protein] + tRNA(Leu) + H(+). The catalysed reaction is N-terminal L-aspartyl-[protein] + L-leucyl-tRNA(Leu) = N-terminal L-leucyl-L-aspartyl-[protein] + tRNA(Leu) + H(+). In terms of biological role, functions in the N-end rule pathway of protein degradation where it conjugates Leu from its aminoacyl-tRNA to the N-termini of proteins containing an N-terminal aspartate or glutamate. In Polynucleobacter asymbioticus (strain DSM 18221 / CIP 109841 / QLW-P1DMWA-1) (Polynucleobacter necessarius subsp. asymbioticus), this protein is Aspartate/glutamate leucyltransferase.